Here is a 419-residue protein sequence, read N- to C-terminus: Isocitrate dehydrogenase [NADP] (419 aa).

Residue T102 coordinates NADP(+). D-threo-isocitrate is bound by residues S111, N113, R117, R127, and R151. D306 lines the Mg(2+) pocket. NADP(+)-binding positions include 338-344 (HGSAPKY), N351, Y390, and R394.

It belongs to the isocitrate and isopropylmalate dehydrogenases family. As to quaternary structure, homodimer. The cofactor is Mg(2+). It depends on Mn(2+) as a cofactor.

It carries out the reaction D-threo-isocitrate + NADP(+) = 2-oxoglutarate + CO2 + NADPH. Its function is as follows. Catalyzes the oxidative decarboxylation of isocitrate to 2-oxoglutarate and carbon dioxide with the concomitant reduction of NADP(+). In Haloferax volcanii (strain ATCC 29605 / DSM 3757 / JCM 8879 / NBRC 14742 / NCIMB 2012 / VKM B-1768 / DS2) (Halobacterium volcanii), this protein is Isocitrate dehydrogenase [NADP].